Here is a 340-residue protein sequence, read N- to C-terminus: Adenine deaminase (340 aa).

Zn(2+) is bound by residues His-17, His-19, and His-197. Residue Glu-200 is the Proton donor of the active site. Asp-278 contacts Zn(2+). Residue Asp-279 coordinates substrate.

Belongs to the metallo-dependent hydrolases superfamily. Adenosine and AMP deaminases family. Adenine deaminase type 2 subfamily. Requires Zn(2+) as cofactor.

It carries out the reaction adenine + H2O + H(+) = hypoxanthine + NH4(+). Its function is as follows. Catalyzes the hydrolytic deamination of adenine to hypoxanthine. Plays an important role in the purine salvage pathway and in nitrogen catabolism. The protein is Adenine deaminase of Streptomyces coelicolor (strain ATCC BAA-471 / A3(2) / M145).